A 550-amino-acid polypeptide reads, in one-letter code: DNA-directed RNA polymerase subunit alpha (550 aa).

Residues 1-333 (MTIYPNLKKI…QENNLFRSEK (333 aa)) are alpha N-terminal domain (alpha-NTD). Positions 185-258 (TTLKKRNILL…TSLGHDTVSN (74 aa)) are insert. Positions 378 to 550 (FLNQSLGQNK…SLTFEYARKF (173 aa)) are alpha C-terminal domain (alpha-CTD).

This sequence belongs to the RNA polymerase alpha chain family. In terms of assembly, in plastids the minimal PEP RNA polymerase catalytic core is composed of four subunits: alpha, beta, beta', and beta''. When a (nuclear-encoded) sigma factor is associated with the core the holoenzyme is formed, which can initiate transcription.

It localises to the plastid. Its subcellular location is the chloroplast. It carries out the reaction RNA(n) + a ribonucleoside 5'-triphosphate = RNA(n+1) + diphosphate. DNA-dependent RNA polymerase catalyzes the transcription of DNA into RNA using the four ribonucleoside triphosphates as substrates. The chain is DNA-directed RNA polymerase subunit alpha (rpoA) from Chlamydomonas reinhardtii (Chlamydomonas smithii).